The sequence spans 160 residues: MMERMHNLNNVYLKECIHFLDSCINALKEFDLRTFISRFYYGMLYLLNAFEFYIRENIEDWHNKDRYANFSKKIRNFLMDLKLYRHASDYILSPRLEHGKHYEEHWEEFKESYLKLKFFHYLHILRQELYSYRHNQLIAIIIEKLEIIEKLLKLYIMLEE.

This is an uncharacterized protein from Methanocaldococcus jannaschii (strain ATCC 43067 / DSM 2661 / JAL-1 / JCM 10045 / NBRC 100440) (Methanococcus jannaschii).